We begin with the raw amino-acid sequence, 245 residues long: Haloacid dehalogenase-like hydrolase domain-containing protein At2g33255 (245 aa).

Thr2 is subject to N-acetylalanine. The active-site Nucleophile is the Asp39. Residues Asp39, Asp41, and Asp186 each coordinate Mg(2+). Asp41 serves as the catalytic Proton donor.

It belongs to the HAD-like hydrolase superfamily. DOG/GPP family. Mg(2+) is required as a cofactor.

The chain is Haloacid dehalogenase-like hydrolase domain-containing protein At2g33255 from Arabidopsis thaliana (Mouse-ear cress).